The primary structure comprises 495 residues: Keratin, type II cuticular 87 (495 aa).

The segment at methionine 1–glutamate 111 is head. The IF rod domain occupies glutamate 111–leucine 422. Positions lysine 112–tyrosine 146 are coil 1A. Positions glutamine 147–methionine 156 are linker 1. Residues glutamate 157 to serine 257 form a coil 1B region. Residues histidine 258–leucine 274 are linker 12. Positions asparagine 275–glutamate 418 are coil 2. The tract at residues glutamate 419–phenylalanine 494 is tail.

The protein belongs to the intermediate filament family. Heterotetramer of two type I and two type II keratins.

The chain is Keratin, type II cuticular 87 from Mus musculus (Mouse).